Reading from the N-terminus, the 1104-residue chain is Protein transport protein SEC31 homolog B (1104 aa).

WD repeat units follow at residues 5-45 (KGVG…EIFK), 62-109 (PSSE…GSQP), 120-160 (VHKG…EPSH), 170-210 (ATQG…PIIN), 214-257 (SVRR…SPVR), 261-301 (GHQR…IVAE), and 304-344 (AGNN…RYGV). At Thr526 the chain carries Phosphothreonine. The interval 527 to 562 (PVSTSAKDFMPSDTDFSTKGEETQEMQEEEEESSDP) is disordered. Residues 549-560 (TQEMQEEEEESS) are compositionally biased toward acidic residues. One copy of the WD 8 repeat lies at 662-707 (TLCDALASKLMAAGNTLAAVLCYICAGNVDRTVEIWSRSLANERDG). Disordered regions lie at residues 782 to 811 (LSAE…PTQA), 851 to 874 (HQAQ…PSMR), 892 to 931 (QQPT…QYPN), and 952 to 994 (TPGV…SNVP). 3 stretches are compositionally biased toward polar residues: residues 786–811 (PETN…PTQA), 863–874 (PAPTSNAQPSMR), and 892–908 (QQPT…SNNA). Residues 959-977 (SVQPASPPTQQAAAQAAPA) are compositionally biased toward low complexity.

Belongs to the WD repeat SEC31 family. In terms of assembly, interacts with SEC13A and SEC13B.

The protein resides in the golgi apparatus. Its subcellular location is the endoplasmic reticulum. Functionally, required for protein transport from the endoplasmic reticulum to the Golgi apparatus. The protein is Protein transport protein SEC31 homolog B of Arabidopsis thaliana (Mouse-ear cress).